A 211-amino-acid polypeptide reads, in one-letter code: MRTGPLFDPSFRDGLDALFQWRRDVRHFRKDPIDEETVARLLACADLAPSVGNSQPWRFVRVDDGARRGVIIDDFTRCNAAARALQPEERQDAYARLKLEGLREAPLQLAVFCDEATDQGHGLGQATMPETRRYSVVMAIHTLWLAARARGLGVGWVSVLDPQTVTAALDVPAEWAFVAYLCIGWPREEHPIPELERLGWQSRRPHPVVRR.

FMN contacts are provided by residues 22 to 26 (RRDVR), Ser-50, Leu-99, and Ser-158.

Belongs to the BluB family. Homooctamer.

The enzyme catalyses FMNH2 + O2 = dialurate + 5,6-dimethylbenzimidazole + D-erythrose 4-phosphate + H(+). Its function is as follows. Involved in the biosynthesis of cobalamin (vitamin B12). Catalyzes the oxidative fragmentation and contraction of the isoalloxazine heterocycle and the cleavage of the ribityl tail of FMNH(2) to form 5,6-dimethylbenzimidazole (DMB) and D-erythrose 4-phosphate (E4P). NAD(P)H is only required initially to reduce FMN and oxygen drives the oxidative fragmentation. The chain is 5,6-dimethylbenzimidazole synthase from Rhodospirillum rubrum (strain ATCC 11170 / ATH 1.1.1 / DSM 467 / LMG 4362 / NCIMB 8255 / S1).